Consider the following 94-residue polypeptide: MYEIEIMPSLDKILQKLSKRDKKKLKAILKKMEEITQNPHHYKNLRHPLNDFKRVHIDKSFVLVFTVDENNKTVIFVDFDHHDNIYKKKKLFKD.

It belongs to the RelE toxin family.

Toxic component of a type II toxin-antitoxin (TA) system. Its cognate antitoxin is RelB4 (Potential). This chain is Putative toxin RelE4 (relE4), found in Methanocaldococcus jannaschii (strain ATCC 43067 / DSM 2661 / JAL-1 / JCM 10045 / NBRC 100440) (Methanococcus jannaschii).